The chain runs to 294 residues: MPRGDSEQVRYCARFSYLWLKFSLIIYSTVFWLIGALVLSVGIYAEVERQKYKTLESAFLAPAIILILLGVVMFMVSFIGVLASLRDNLYLLQAFMYILGICLIMELIGGVVALTFRNQTIDFLNDNIRRGIENYYDDLDFKNIMDFVQKKFKCCGGEDYRDWSKNQYHDCSAPGPLACGVPYTCCIRNTTEVVNTMCGYKTIDKERFSVQDVIYVRGCTNAVIIWFMDNYTIMAGILLGILLPQFLGVLLTLLYITRVEDIIMEHSVTDGLLGPGAKPSVEAAGTGCCLCYPN.

The Cytoplasmic segment spans residues 1–23 (MPRGDSEQVRYCARFSYLWLKFS). A helical membrane pass occupies residues 24–44 (LIIYSTVFWLIGALVLSVGIY). At 45 to 62 (AEVERQKYKTLESAFLAP) the chain is on the extracellular side. The helical transmembrane segment at 63-83 (AIILILLGVVMFMVSFIGVLA) threads the bilayer. Residues 84–93 (SLRDNLYLLQ) lie on the Cytoplasmic side of the membrane. The helical transmembrane segment at 94–114 (AFMYILGICLIMELIGGVVAL) threads the bilayer. The Extracellular segment spans residues 115–235 (TFRNQTIDFL…WFMDNYTIMA (121 aa)). A glycan (N-linked (GlcNAc...) asparagine) is linked at N118. Disulfide bonds link C154–C219, C155–C185, C171–C179, and C186–C198. 2 N-linked (GlcNAc...) asparagine glycosylation sites follow: N189 and N230. Residues 236-256 (GILLGILLPQFLGVLLTLLYI) traverse the membrane as a helical segment. Residues 257-294 (TRVEDIIMEHSVTDGLLGPGAKPSVEAAGTGCCLCYPN) lie on the Cytoplasmic side of the membrane.

It belongs to the tetraspanin (TM4SF) family. As to quaternary structure, interacts with ADAM10; the interaction influences ADAM10 substrate specificity, endocytosis and turnover. Palmitoylated.

The protein localises to the cell membrane. Its subcellular location is the late endosome membrane. Its function is as follows. Part of TspanC8 subgroup, composed of 6 members that interact with the transmembrane metalloprotease ADAM10. This interaction is required for ADAM10 exit from the endoplasmic reticulum and for enzymatic maturation and trafficking to the cell surface as well as substrate specificity. Different TspanC8/ADAM10 complexes have distinct substrates. Promotes ADAM10-mediated cleavage of CDH2. Negatively regulates ligand-induced Notch activity probably by regulating ADAM10 activity. This is Tetraspanin-15 from Homo sapiens (Human).